Here is a 120-residue protein sequence, read N- to C-terminus: NAD(P)H-quinone oxidoreductase subunit 3 (120 aa).

A run of 3 helical transmembrane segments spans residues 6–26 (GYDA…LALV), 64–84 (MFAL…PWAV), and 89–109 (LGLL…VALA).

It belongs to the complex I subunit 3 family. As to quaternary structure, NDH-1 can be composed of about 15 different subunits; different subcomplexes with different compositions have been identified which probably have different functions.

It is found in the cellular thylakoid membrane. It catalyses the reaction a plastoquinone + NADH + (n+1) H(+)(in) = a plastoquinol + NAD(+) + n H(+)(out). The catalysed reaction is a plastoquinone + NADPH + (n+1) H(+)(in) = a plastoquinol + NADP(+) + n H(+)(out). Functionally, NDH-1 shuttles electrons from an unknown electron donor, via FMN and iron-sulfur (Fe-S) centers, to quinones in the respiratory and/or the photosynthetic chain. The immediate electron acceptor for the enzyme in this species is believed to be plastoquinone. Couples the redox reaction to proton translocation, and thus conserves the redox energy in a proton gradient. Cyanobacterial NDH-1 also plays a role in inorganic carbon-concentration. The sequence is that of NAD(P)H-quinone oxidoreductase subunit 3 from Synechococcus sp. (strain CC9605).